We begin with the raw amino-acid sequence, 790 residues long: Potassium transporter 22 (790 aa).

The Cytoplasmic segment spans residues Met1–Arg64. Residues Leu65–Tyr85 form a helical membrane-spanning segment. The Extracellular portion of the chain corresponds to Ser86–Asp98. A helical transmembrane segment spans residues Leu99 to Val119. Topologically, residues Tyr120–Arg198 are cytoplasmic. A helical membrane pass occupies residues Ile199–Thr219. Residues Pro220 to Pro236 lie on the Extracellular side of the membrane. Residues His237 to Val257 form a helical membrane-spanning segment. The Cytoplasmic segment spans residues Gln258–Lys264. Residues Val265–Val285 form a helical membrane-spanning segment. The Extracellular portion of the chain corresponds to Tyr286–Ser318. A helical transmembrane segment spans residues Leu319–Phe339. Residues Ser340–Gln345 lie on the Cytoplasmic side of the membrane. A helical transmembrane segment spans residues Leu346–Tyr366. Over Leu367–Val385 the chain is Extracellular. A helical transmembrane segment spans residues Leu386 to Ile406. Topologically, residues Ser407 to Gln437 are cytoplasmic. A helical transmembrane segment spans residues Val438–Ala458. Residues Arg459 to Gly469 lie on the Extracellular side of the membrane. A helical transmembrane segment spans residues Ile470–Val490. Residues Trp491–Arg492 are Cytoplasmic-facing. Residues Val493–Leu513 form a helical membrane-spanning segment. Residues Thr514–Lys519 are Extracellular-facing. A helical transmembrane segment spans residues Phe520 to Val540. Residues Trp541–Ile790 lie on the Cytoplasmic side of the membrane.

Belongs to the HAK/KUP transporter (TC 2.A.72.3) family.

It localises to the membrane. Its function is as follows. High-affinity potassium transporter. The sequence is that of Potassium transporter 22 (HAK22) from Oryza sativa subsp. japonica (Rice).